The primary structure comprises 109 residues: Nucleoid-associated protein VIBHAR_03086 (109 aa).

Disordered regions lie at residues 1–21 (MFGKGGMGNLMKQAQQMQDRM) and 88–109 (QKEKMASVTGGMQLPPGMKMPF).

This sequence belongs to the YbaB/EbfC family. In terms of assembly, homodimer.

Its subcellular location is the cytoplasm. It localises to the nucleoid. Functionally, binds to DNA and alters its conformation. May be involved in regulation of gene expression, nucleoid organization and DNA protection. The protein is Nucleoid-associated protein VIBHAR_03086 of Vibrio campbellii (strain ATCC BAA-1116).